A 343-amino-acid chain; its full sequence is Protein RecA (343 aa).

ATP is bound at residue 65–72 (GPESSGKT).

Belongs to the RecA family.

Its subcellular location is the cytoplasm. Its function is as follows. Can catalyze the hydrolysis of ATP in the presence of single-stranded DNA, the ATP-dependent uptake of single-stranded DNA by duplex DNA, and the ATP-dependent hybridization of homologous single-stranded DNAs. It interacts with LexA causing its activation and leading to its autocatalytic cleavage. The polypeptide is Protein RecA (Pseudoalteromonas atlantica (strain T6c / ATCC BAA-1087)).